The chain runs to 658 residues: MFQNNPLLAQLKQQIEANKEYVEGTVKASDKAFGFLECDKKSYFIPPMEMKKVMHGDKVKAVVKREDDKEQVEIDSLLEPMLDRFIAQVRFNKDNKLQLIVDHPSIKNIIPANTHKKVTETLESGDWVVAQLKTHPLRDDRFLFAQVTQFICKADDNFAPWWVTLARHEQPREPVANEKSYELHDELDREDLTSLYFTTIDSPSTQDMDDALYIEPIKQGEVQTGWRLVVAIADPTAYIPENSNLEKAARQRCFTNYLPGFNIPMLPRELSDDLCSLVPNKKRPALVGYIETDLAGNITGDTRFVSAWVESKAKLAYDNVSDYLEQVENAWQPESAETKQQIDWLHQFTLARIEWRRNNALLFKESGDYSFELNEDGSVRDIHVEYRRIANQMIEESMIIANICCAKFLADNAKTGVFNTHAGFDPKNLELAQKFLLDTLSTDENRDALTAFYAPEKLATLEGYCEMRRSIDEFPEKFLELRLRRYLTFAEFKSEVAPHLGLGISHYATWTSPIRKYGDMVNHRLIKQVLLGKQAKTVEEGILVRLQEARRQNRLVERDIADWLYARYLFPMVEQAVEFDCEIADVSRGGVRAKVIANGAQIFVPFSTLHDKKEEMEFRPEEIALYIKGEKAYQIGQAVKVKLTEVRLETRSIVGNII.

The RNB domain occupies 189–530 (REDLTSLYFT…VNHRLIKQVL (342 aa)). The 83-residue stretch at 576-658 (AVEFDCEIAD…ETRSIVGNII (83 aa)) folds into the S1 motif domain.

It belongs to the RNR ribonuclease family. RNase II subfamily.

The protein resides in the cytoplasm. The enzyme catalyses Exonucleolytic cleavage in the 3'- to 5'-direction to yield nucleoside 5'-phosphates.. In terms of biological role, involved in mRNA degradation. Hydrolyzes single-stranded polyribonucleotides processively in the 3' to 5' direction. The protein is Exoribonuclease 2 of Actinobacillus pleuropneumoniae serotype 5b (strain L20).